A 925-amino-acid chain; its full sequence is Probable replication restart protein PriA (925 aa).

Cysteine 645, cysteine 648, cysteine 654, cysteine 657, cysteine 672, cysteine 675, cysteine 685, and cysteine 688 together coordinate Zn(2+).

The protein belongs to the helicase family. PriA subfamily. As to quaternary structure, interacts with DnaB (DR_0549). Component of the replication restart primosome. Requires Zn(2+) as cofactor.

Its function is as follows. Initiates the restart of stalled replication forks, which reloads the replicative helicase on sites other than the origin of replication. Recognizes abandoned replication forks and remodels them to uncover a helicase loading site. Promotes assembly of the primosome at these replication forks. Recognizes and binds DNA at stalled replication forks, also binds single-stranded (ss)DNA. The chain is Probable replication restart protein PriA from Deinococcus radiodurans (strain ATCC 13939 / DSM 20539 / JCM 16871 / CCUG 27074 / LMG 4051 / NBRC 15346 / NCIMB 9279 / VKM B-1422 / R1).